The following is a 243-amino-acid chain: Carboxy-S-adenosyl-L-methionine synthase (243 aa).

S-adenosyl-L-methionine-binding positions include Y40, 65–67 (GCS), 90–91 (DN), 118–119 (DI), N133, and R200.

The protein belongs to the class I-like SAM-binding methyltransferase superfamily. Cx-SAM synthase family. Homodimer.

It catalyses the reaction prephenate + S-adenosyl-L-methionine = carboxy-S-adenosyl-L-methionine + 3-phenylpyruvate + H2O. In terms of biological role, catalyzes the conversion of S-adenosyl-L-methionine (SAM) to carboxy-S-adenosyl-L-methionine (Cx-SAM). The sequence is that of Carboxy-S-adenosyl-L-methionine synthase from Shewanella sp. (strain ANA-3).